A 271-amino-acid chain; its full sequence is Urease accessory protein UreD (271 aa).

This sequence belongs to the UreD family. In terms of assembly, ureD, UreF and UreG form a complex that acts as a GTP-hydrolysis-dependent molecular chaperone, activating the urease apoprotein by helping to assemble the nickel containing metallocenter of UreC. The UreE protein probably delivers the nickel.

It is found in the cytoplasm. Required for maturation of urease via the functional incorporation of the urease nickel metallocenter. The chain is Urease accessory protein UreD from Actinomyces naeslundii.